The following is a 72-amino-acid chain: Translation initiation factor IF-1 (72 aa).

In terms of domain architecture, S1-like spans 1 to 72 (MAKDDVIEVE…TRGRITYRFK (72 aa)).

The protein belongs to the IF-1 family. As to quaternary structure, component of the 30S ribosomal translation pre-initiation complex which assembles on the 30S ribosome in the order IF-2 and IF-3, IF-1 and N-formylmethionyl-tRNA(fMet); mRNA recruitment can occur at any time during PIC assembly.

The protein resides in the cytoplasm. One of the essential components for the initiation of protein synthesis. Stabilizes the binding of IF-2 and IF-3 on the 30S subunit to which N-formylmethionyl-tRNA(fMet) subsequently binds. Helps modulate mRNA selection, yielding the 30S pre-initiation complex (PIC). Upon addition of the 50S ribosomal subunit IF-1, IF-2 and IF-3 are released leaving the mature 70S translation initiation complex. In Streptococcus pneumoniae serotype 2 (strain D39 / NCTC 7466), this protein is Translation initiation factor IF-1.